A 154-amino-acid polypeptide reads, in one-letter code: MIIKNLQEFYRLLIPNAPLIAIDYGSKKLGIALSNQERSIAMPLNTITEINKKIVITSLLNIIEKYKVCGVIIGLPIDMSGAVTEQTNIVMKFAEELAKSINLPIYLQDERLTTKAANNLLKSFGVKRKDRNNNDDAVAASMILETVLDSIKNI.

It belongs to the YqgF nuclease family.

Its subcellular location is the cytoplasm. In terms of biological role, could be a nuclease involved in processing of the 5'-end of pre-16S rRNA. This chain is Putative pre-16S rRNA nuclease, found in Rickettsia peacockii (strain Rustic).